A 252-amino-acid polypeptide reads, in one-letter code: Hydroxyacylglutathione hydrolase (252 aa).

Zn(2+)-binding residues include His54, His56, Asp58, His59, His111, Asp128, and His166.

The protein belongs to the metallo-beta-lactamase superfamily. Glyoxalase II family. In terms of assembly, monomer. Zn(2+) serves as cofactor.

It catalyses the reaction an S-(2-hydroxyacyl)glutathione + H2O = a 2-hydroxy carboxylate + glutathione + H(+). Its pathway is secondary metabolite metabolism; methylglyoxal degradation; (R)-lactate from methylglyoxal: step 2/2. Thiolesterase that catalyzes the hydrolysis of S-D-lactoyl-glutathione to form glutathione and D-lactic acid. The sequence is that of Hydroxyacylglutathione hydrolase from Aliivibrio fischeri (strain MJ11) (Vibrio fischeri).